A 1040-amino-acid chain; its full sequence is Isoleucine--tRNA ligase (1040 aa).

The 'HIGH' region motif lies at 47 to 57 (PYCSGSIHLGT). A 'KMSKS' region motif is present at residues 605–609 (KMSKS). Lys608 contributes to the ATP binding site.

It belongs to the class-I aminoacyl-tRNA synthetase family. IleS type 2 subfamily. As to quaternary structure, monomer. Zn(2+) serves as cofactor.

The protein localises to the cytoplasm. The catalysed reaction is tRNA(Ile) + L-isoleucine + ATP = L-isoleucyl-tRNA(Ile) + AMP + diphosphate. Functionally, catalyzes the attachment of isoleucine to tRNA(Ile). As IleRS can inadvertently accommodate and process structurally similar amino acids such as valine, to avoid such errors it has two additional distinct tRNA(Ile)-dependent editing activities. One activity is designated as 'pretransfer' editing and involves the hydrolysis of activated Val-AMP. The other activity is designated 'posttransfer' editing and involves deacylation of mischarged Val-tRNA(Ile). This is Isoleucine--tRNA ligase from Methanococcus aeolicus (strain ATCC BAA-1280 / DSM 17508 / OCM 812 / Nankai-3).